We begin with the raw amino-acid sequence, 242 residues long: Aliphatic sulfonates import ATP-binding protein SsuB 1 (242 aa).

The ABC transporter domain maps to 11 to 227 (VAVRRLSRAF…RPSHPDFEDL (217 aa)). 43–50 (GESGSGKT) serves as a coordination point for ATP.

The protein belongs to the ABC transporter superfamily. Aliphatic sulfonates importer (TC 3.A.1.17.2) family. In terms of assembly, the complex is composed of two ATP-binding proteins (SsuB), two transmembrane proteins (SsuC) and a solute-binding protein (SsuA).

It localises to the cell inner membrane. The enzyme catalyses ATP + H2O + aliphatic sulfonate-[sulfonate-binding protein]Side 1 = ADP + phosphate + aliphatic sulfonateSide 2 + [sulfonate-binding protein]Side 1.. In terms of biological role, part of the ABC transporter complex SsuABC involved in aliphatic sulfonates import. Responsible for energy coupling to the transport system. In Paracoccus denitrificans (strain Pd 1222), this protein is Aliphatic sulfonates import ATP-binding protein SsuB 1.